We begin with the raw amino-acid sequence, 336 residues long: NADH-quinone oxidoreductase subunit H (336 aa).

8 helical membrane passes run 17–37, 85–105, 116–136, 154–174, 190–210, 247–267, 274–294, and 309–329; these read WFII…TYAI, ALFT…LAVM, LGIG…GVIT, AAQM…IVLL, VWNI…AQAE, VYMF…WLPI, IPGI…QFWI, and FAWK…AVVV.

Belongs to the complex I subunit 1 family. In terms of assembly, NDH-1 is composed of 14 different subunits. Subunits NuoA, H, J, K, L, M, N constitute the membrane sector of the complex.

The protein resides in the cell membrane. It carries out the reaction a quinone + NADH + 5 H(+)(in) = a quinol + NAD(+) + 4 H(+)(out). NDH-1 shuttles electrons from NADH, via FMN and iron-sulfur (Fe-S) centers, to quinones in the respiratory chain. The immediate electron acceptor for the enzyme in this species is believed to be ubiquinone. Couples the redox reaction to proton translocation (for every two electrons transferred, four hydrogen ions are translocated across the cytoplasmic membrane), and thus conserves the redox energy in a proton gradient. This subunit may bind ubiquinone. In Brevibacillus brevis (strain 47 / JCM 6285 / NBRC 100599), this protein is NADH-quinone oxidoreductase subunit H.